Consider the following 323-residue polypeptide: Breast cancer metastasis-suppressor 1-like protein (323 aa).

A compositionally biased stretch (basic and acidic residues) spans 1 to 17 (MPVHSRGDKKETNHHDE). The segment at 1 to 56 (MPVHSRGDKKETNHHDEMEVDYAENEGSSSEDEDTESSSVSEDGDSSEMDDEDCER) is disordered. Positions 18–53 (MEVDYAENEGSSSEDEDTESSSVSEDGDSSEMDDED) are enriched in acidic residues. Coiled coils occupy residues 52–84 (EDCE…KERL) and 149–180 (EKLL…ITSE). At S197 the chain carries Phosphoserine. Residues K240 and K246 each participate in a glycyl lysine isopeptide (Lys-Gly) (interchain with G-Cter in SUMO2) cross-link.

The protein belongs to the BRMS1 family. In terms of assembly, component of the Sin3/HDAC1 corepressor complex at least composed of BRMS1, BRMS1L and ING2/ING1L. Interacts with HDAC and SIN3A.

The protein resides in the nucleus. In terms of biological role, involved in the histone deacetylase (HDAC1)-dependent transcriptional repression activity. When overexpressed in lung cancer cell line that lacks p53/TP53 expression, inhibits cell growth. The protein is Breast cancer metastasis-suppressor 1-like protein (BRMS1L) of Bos taurus (Bovine).